A 185-amino-acid polypeptide reads, in one-letter code: Threonylcarbamoyl-AMP synthase (185 aa).

The region spanning Ala-5–Arg-185 is the YrdC-like domain.

This sequence belongs to the SUA5 family. TsaC subfamily.

It is found in the cytoplasm. It carries out the reaction L-threonine + hydrogencarbonate + ATP = L-threonylcarbamoyladenylate + diphosphate + H2O. In terms of biological role, required for the formation of a threonylcarbamoyl group on adenosine at position 37 (t(6)A37) in tRNAs that read codons beginning with adenine. Catalyzes the conversion of L-threonine, HCO(3)(-)/CO(2) and ATP to give threonylcarbamoyl-AMP (TC-AMP) as the acyladenylate intermediate, with the release of diphosphate. The polypeptide is Threonylcarbamoyl-AMP synthase (Chromohalobacter salexigens (strain ATCC BAA-138 / DSM 3043 / CIP 106854 / NCIMB 13768 / 1H11)).